A 265-amino-acid polypeptide reads, in one-letter code: Acetylglutamate kinase (265 aa).

Substrate-binding positions include 41 to 42 (GG), arginine 63, and asparagine 156.

This sequence belongs to the acetylglutamate kinase family. ArgB subfamily.

It localises to the cytoplasm. The enzyme catalyses N-acetyl-L-glutamate + ATP = N-acetyl-L-glutamyl 5-phosphate + ADP. The protein operates within amino-acid biosynthesis; L-arginine biosynthesis; N(2)-acetyl-L-ornithine from L-glutamate: step 2/4. Catalyzes the ATP-dependent phosphorylation of N-acetyl-L-glutamate. The protein is Acetylglutamate kinase of Brevibacillus brevis (strain 47 / JCM 6285 / NBRC 100599).